Here is a 325-residue protein sequence, read N- to C-terminus: LIM and senescent cell antigen-like-containing domain protein 1 (325 aa).

The residue at position 2 (alanine 2) is an N-acetylalanine. LIM zinc-binding domains follow at residues 10 to 62 (CERC…CEHD), 71 to 121 (CHQC…CRPC), 135 to 184 (CQKC…CLPC), 193 to 243 (CGAC…CETH), and 252 to 303 (CFHC…CKKC).

Component of the heterotrimeric IPP (ILK-PINCH-PARVIN) complex composed of ILK, LIMS1/PINCH and PARVA; the complex binds to F-actin via the C-terminal tail of LIMS1 and the N-terminal region of PARVA, promoting F-actin filament bundling. Formation of the IPP complex is dependent on protein kinase C and precedes integrin-mediated cell adhesion and spreading. Competes with LIMS2 for interaction with ILK. Interacts (via LIM zinc-binding 5) with TGFB1I1. Interacts with SH3/SH2 adapter NCK2, thereby linking the complex to cell surface receptors. As to expression, expressed in most tissues except in the brain.

The protein localises to the cell junction. The protein resides in the focal adhesion. Its subcellular location is the cell membrane. Its function is as follows. Within the IPP (ILK-PINCH-PARVIN) complex, binds to F-actin, promoting F-actin bundling, a process required to generate force for actin cytoskeleton reorganization and subsequent dynamic cell adhesion events such as cell spreading and migration. The polypeptide is LIM and senescent cell antigen-like-containing domain protein 1 (LIMS1) (Homo sapiens (Human)).